The primary structure comprises 370 residues: Cytochrome b (370 aa).

The next 4 helical transmembrane spans lie at 25–45 (FGSMLLACLTLQLLTGFFLAV), 69–90 (WMMQNLHAIGASMFFICIYIHI), 105–125 (WLSGTTLLIMLMATAFFGYVL), and 170–190 (FFALHFILPFGIISLSSLHIL). Heme b-binding residues include His-75 and His-89. Heme b-binding residues include His-174 and His-188. Residue His-193 participates in a ubiquinone binding. The next 4 helical transmembrane spans lie at 218–238 (YKDMLMLTIMTIMLLTIVSFF), 280–300 (LGGALALTMSIMMLLTLPFTH), 312–332 (LMQLTFWTFTATFLVISWTAT), and 339–358 (FTTISQVAALMYFLFFISNP).

This sequence belongs to the cytochrome b family. As to quaternary structure, the cytochrome bc1 complex contains 3 respiratory subunits (MT-CYB, CYC1 and UQCRFS1), 2 core proteins (UQCRC1 and UQCRC2) and probably 6 low-molecular weight proteins. Heme b is required as a cofactor.

The protein resides in the mitochondrion inner membrane. Component of the ubiquinol-cytochrome c reductase complex (complex III or cytochrome b-c1 complex) that is part of the mitochondrial respiratory chain. The b-c1 complex mediates electron transfer from ubiquinol to cytochrome c. Contributes to the generation of a proton gradient across the mitochondrial membrane that is then used for ATP synthesis. The sequence is that of Cytochrome b (MT-CYB) from Chilabothrus strigilatus strigilatus (New Providence boa constrictor).